We begin with the raw amino-acid sequence, 179 residues long: Large ribosomal subunit protein uL5 (179 aa).

This sequence belongs to the universal ribosomal protein uL5 family. Part of the 50S ribosomal subunit; part of the 5S rRNA/L5/L18/L25 subcomplex. Contacts the 5S rRNA and the P site tRNA. Forms a bridge to the 30S subunit in the 70S ribosome.

Functionally, this is one of the proteins that bind and probably mediate the attachment of the 5S RNA into the large ribosomal subunit, where it forms part of the central protuberance. In the 70S ribosome it contacts protein S13 of the 30S subunit (bridge B1b), connecting the 2 subunits; this bridge is implicated in subunit movement. Contacts the P site tRNA; the 5S rRNA and some of its associated proteins might help stabilize positioning of ribosome-bound tRNAs. This is Large ribosomal subunit protein uL5 from Nitrosomonas europaea (strain ATCC 19718 / CIP 103999 / KCTC 2705 / NBRC 14298).